The primary structure comprises 92 residues: Small ribosomal subunit protein uS19 (92 aa).

This sequence belongs to the universal ribosomal protein uS19 family.

Protein S19 forms a complex with S13 that binds strongly to the 16S ribosomal RNA. The chain is Small ribosomal subunit protein uS19 (rpsS) from Halalkalibacterium halodurans (strain ATCC BAA-125 / DSM 18197 / FERM 7344 / JCM 9153 / C-125) (Bacillus halodurans).